A 214-amino-acid chain; its full sequence is Charged multivesicular body protein 2b (214 aa).

The stretch at 16–55 (EQNKELRGTQRAITRDRAALEKQEKQLEMEIKKMAKAGNK) forms a coiled coil. The segment at 178-203 (MAKAPSAAKGLPSTSASKSSGISDEE) is disordered. Positions 189-199 (PSTSASKSSGI) are enriched in polar residues. The short motif at 202–212 (EEIERQLKALG) is the MIT-interacting motif element.

Belongs to the SNF7 family. In terms of assembly, probable core component of the endosomal sorting required for transport complex III (ESCRT-III). ESCRT-III components are thought to multimerize to form a flat lattice on the perimeter membrane of the endosome.

The protein localises to the cytoplasm. It localises to the cytosol. The protein resides in the late endosome membrane. In terms of biological role, probable core component of the endosomal sorting required for transport complex III (ESCRT-III) which is involved in multivesicular bodies (MVBs) formation and sorting of endosomal cargo proteins into MVBs. MVBs contain intraluminal vesicles (ILVs) that are generated by invagination and scission from the limiting membrane of the endosome and mostly are delivered to lysosomes enabling degradation of membrane proteins, such as stimulated growth factor receptors, lysosomal enzymes and lipids. The polypeptide is Charged multivesicular body protein 2b (chmp2b) (Xenopus tropicalis (Western clawed frog)).